Reading from the N-terminus, the 291-residue chain is uncharacterized protein (291 aa).

This is an uncharacterized protein from Haemophilus influenzae (strain ATCC 51907 / DSM 11121 / KW20 / Rd).